Here is a 478-residue protein sequence, read N- to C-terminus: Major facilitator superfamily domain-containing protein 12 (478 aa).

Position 1 is an N-acetylmethionine (Met1). Over 1 to 26 (MVPGSPAAGAGPAPRALSLAARLSYA) the chain is Cytoplasmic. Residues 27–47 (VGHFLNDLCASMWFTYLLLYL) traverse the membrane as a helical segment. Over 48-56 (HSVRAYSSR) the chain is Lumenal. A helical transmembrane segment spans residues 57–77 (GAGLLLLLGQVADGLCTPLVG). Residues 78 to 97 (YEADRAAGRCARCGPRKAWH) lie on the Cytoplasmic side of the membrane. The helical transmembrane segment at 98-118 (LVGTVCVLLSFPFIFSPCLGC) threads the bilayer. The Lumenal portion of the chain corresponds to 119-124 (GAATPE). Residues 125-145 (WAALLYYGPFIVVFQFGWAAT) form a helical membrane-spanning segment. Residues 146 to 168 (QIAHLSLIPELVTSDHEKVELTA) lie on the Cytoplasmic side of the membrane. The chain crosses the membrane as a helical span at residues 169–189 (LRYAFTVVANITVFGAAWLLL). The Lumenal portion of the chain corresponds to 190–216 (RLQGSAREGPPDEAGDHLGVQDVPVFR). Residues 217 to 237 (TLSLCVVGVGAVFSLLFHLGT) traverse the membrane as a helical segment. Topologically, residues 238–277 (RERRRPPAQEPDERSPLLAPATARPLLLWKHWLREPSFYQ) are cytoplasmic. The chain crosses the membrane as a helical span at residues 278 to 300 (VGLLYMSTRLIVNLSQTYIAMYL). Topologically, residues 301–308 (TYSLNLPK) are lumenal. The chain crosses the membrane as a helical span at residues 309 to 329 (KFIATIPLVMYVSGFCSSFLM). The Cytoplasmic portion of the chain corresponds to 330 to 338 (KPVNKCIGR). The helical transmembrane segment at 339-359 (NMTYFVGLLVILAFAAWVVLV) threads the bilayer. Over 360–361 (DE) the chain is Lumenal. A helical transmembrane segment spans residues 362–382 (LGMAVYVAAVLLGGGCATILV). The Cytoplasmic segment spans residues 383–400 (TSLAMTADLIGPHTHSGA). Residues 401 to 421 (FVYGAMSFSDKVANGLAVMVI) traverse the membrane as a helical segment. The Lumenal segment spans residues 422-436 (QSLHPCSLELCCRAC). A helical transmembrane segment spans residues 437–457 (VGFYHWVMVAVTGGVGVAATL). Over 458-478 (SLCSLLVWPIRLRSWDPGAQP) the chain is Cytoplasmic.

It belongs to the major facilitator superfamily.

The protein resides in the melanosome membrane. It is found in the lysosome membrane. The catalysed reaction is L-cysteine(in) = L-cysteine(out). Transporter that mediates the import of cysteine into melanosomes, thereby regulating skin/hair pigmentation. In melanosomes, cysteine import is required both for normal levels of cystine, the oxidized dimer of cysteine, and provide cysteine for the production of the cysteinyldopas used in pheomelanin synthesis, thereby regulating skin/hair pigmentation. Also catalyzes import of cysteine into lysosomes in non-pigmented cells, regulating lysosomal cystine and cysteine storage, which is essnetial for redox homeostasis. This Equus caballus (Horse) protein is Major facilitator superfamily domain-containing protein 12.